Here is a 241-residue protein sequence, read N- to C-terminus: Phosphoribosylaminoimidazole-succinocarboxamide synthase (241 aa).

The protein belongs to the SAICAR synthetase family.

The catalysed reaction is 5-amino-1-(5-phospho-D-ribosyl)imidazole-4-carboxylate + L-aspartate + ATP = (2S)-2-[5-amino-1-(5-phospho-beta-D-ribosyl)imidazole-4-carboxamido]succinate + ADP + phosphate + 2 H(+). Its pathway is purine metabolism; IMP biosynthesis via de novo pathway; 5-amino-1-(5-phospho-D-ribosyl)imidazole-4-carboxamide from 5-amino-1-(5-phospho-D-ribosyl)imidazole-4-carboxylate: step 1/2. In Oenococcus oeni (strain ATCC BAA-331 / PSU-1), this protein is Phosphoribosylaminoimidazole-succinocarboxamide synthase.